We begin with the raw amino-acid sequence, 25 residues long: Aggression-stimulating peptide (25 aa).

Expressed by the skin glands of male frogs.

It localises to the secreted. In terms of biological role, stimulates aggressive behavior in male frogs. No effect on female frogs. This is Aggression-stimulating peptide from Leptodactylus fallax (Mountain chicken frog).